A 404-amino-acid chain; its full sequence is Phosphopentomutase (404 aa).

Mn(2+) is bound by residues D10, D303, H308, D344, H345, and H356.

It belongs to the phosphopentomutase family. Requires Mn(2+) as cofactor.

The protein localises to the cytoplasm. It carries out the reaction 2-deoxy-alpha-D-ribose 1-phosphate = 2-deoxy-D-ribose 5-phosphate. The catalysed reaction is alpha-D-ribose 1-phosphate = D-ribose 5-phosphate. It participates in carbohydrate degradation; 2-deoxy-D-ribose 1-phosphate degradation; D-glyceraldehyde 3-phosphate and acetaldehyde from 2-deoxy-alpha-D-ribose 1-phosphate: step 1/2. Isomerase that catalyzes the conversion of deoxy-ribose 1-phosphate (dRib-1-P) and ribose 1-phosphate (Rib-1-P) to deoxy-ribose 5-phosphate (dRib-5-P) and ribose 5-phosphate (Rib-5-P), respectively. The sequence is that of Phosphopentomutase from Shewanella sp. (strain MR-4).